Here is a 160-residue protein sequence, read N- to C-terminus: Small ribosomal subunit protein uS7 (160 aa).

This sequence belongs to the universal ribosomal protein uS7 family. Part of the 30S ribosomal subunit. Contacts proteins S9 and S11.

One of the primary rRNA binding proteins, it binds directly to 16S rRNA where it nucleates assembly of the head domain of the 30S subunit. Is located at the subunit interface close to the decoding center, probably blocks exit of the E-site tRNA. The sequence is that of Small ribosomal subunit protein uS7 from Rickettsia typhi (strain ATCC VR-144 / Wilmington).